The primary structure comprises 983 residues: Importin beta-like protein kap113 (983 aa).

One can recognise an Importin N-terminal domain in the interval 24–96 (AEGHLNNWKK…RCNALLGSIK (73 aa)).

Belongs to the importin beta family.

The protein localises to the nucleus. In terms of biological role, functions as a component of the nuclear pore complex (NPC). NPC components, collectively referred to as nucleoporins (NUPs), can play the role of both NPC structural components and of docking or interaction partners for transiently associated nuclear transport factors. Active directional transport is assured by both, a Phe-Gly (FG) repeat affinity gradient for these transport factors across the NPC and a transport cofactor concentration gradient across the nuclear envelope. Involved in the export of mRNA from the nucleus to the cytoplasm. May play a role in mitotic spindle formation and/or function. The chain is Importin beta-like protein kap113 (kap113) from Schizosaccharomyces pombe (strain 972 / ATCC 24843) (Fission yeast).